The chain runs to 179 residues: Adenine phosphoribosyltransferase (179 aa).

It belongs to the purine/pyrimidine phosphoribosyltransferase family. Homodimer.

Its subcellular location is the cytoplasm. It catalyses the reaction AMP + diphosphate = 5-phospho-alpha-D-ribose 1-diphosphate + adenine. It participates in purine metabolism; AMP biosynthesis via salvage pathway; AMP from adenine: step 1/1. Its function is as follows. Catalyzes a salvage reaction resulting in the formation of AMP, that is energically less costly than de novo synthesis. In Histophilus somni (strain 129Pt) (Haemophilus somnus), this protein is Adenine phosphoribosyltransferase.